Reading from the N-terminus, the 239-residue chain is Ribulose-phosphate 3-epimerase (239 aa).

Ser9 contributes to the substrate binding site. 3 residues coordinate a divalent metal cation: His34, Asp36, and His78. The Proton acceptor role is filled by Asp36. Substrate is bound by residues His78, 154 to 157 (GFGG), 183 to 185 (DGG), and 205 to 207 (GTS). Residue Asp183 participates in a divalent metal cation binding. The active-site Proton donor is Asp183.

It belongs to the ribulose-phosphate 3-epimerase family. Co(2+) serves as cofactor. The cofactor is Fe(2+). Mn(2+) is required as a cofactor. Requires Zn(2+) as cofactor.

It catalyses the reaction D-ribulose 5-phosphate = D-xylulose 5-phosphate. It functions in the pathway carbohydrate degradation; pentose phosphate pathway; D-xylulose 5-phosphate from D-ribulose 5-phosphate (non-oxidative stage): step 1/1. Functionally, catalyzes the reversible epimerization of D-ribulose 5-phosphate to D-xylulose 5-phosphate. The sequence is that of Ribulose-phosphate 3-epimerase (RPE1) from Eremothecium gossypii (strain ATCC 10895 / CBS 109.51 / FGSC 9923 / NRRL Y-1056) (Yeast).